A 245-amino-acid chain; its full sequence is Thiopurine S-methyltransferase (245 aa).

29 to 40 (WREKWVDGKIGF) serves as a coordination point for S-adenosyl-L-methionine. Phenylalanine 40 is a substrate binding site. Lysine 58 carries the post-translational modification N6-acetyllysine. Positions 69, 90, and 152 each coordinate S-adenosyl-L-methionine.

This sequence belongs to the class I-like SAM-binding methyltransferase superfamily. TPMT family. Monomer.

The protein resides in the cytoplasm. It catalyses the reaction S-adenosyl-L-methionine + a thiopurine = S-adenosyl-L-homocysteine + a thiopurine S-methylether.. The sequence is that of Thiopurine S-methyltransferase (TPMT) from Panthera leo (Lion).